A 412-amino-acid chain; its full sequence is Protein translocase subunit SecY (412 aa).

9 helical membrane-spanning segments follow: residues 17–37 (IFLT…PVPG), 58–78 (IFSG…VPYI), 117–137 (ALGW…PYVF), 143–163 (FVVQ…WFSE), 170–190 (IGNG…PKLI), 251–271 (VMPI…GQVI), 293–313 (YLIF…SLII), 350–370 (TFLG…IENI), and 372–392 (SIST…GVAI).

The protein belongs to the SecY/SEC61-alpha family. Component of the plastid Sec protein translocase complex, which is composed of at least SecY and SecE.

It localises to the plastid. The protein localises to the chloroplast thylakoid membrane. Its function is as follows. The central subunit of the protein translocation channel SecYE. Consists of two halves formed by TMs 1-5 and 6-10. These two domains form a lateral gate at the front which open onto the bilayer between TMs 2 and 7, and are clamped together by SecE at the back. The channel is closed by both a pore ring composed of hydrophobic SecY resides and a short helix (helix 2A) on the extracellular side of the membrane which forms a plug. This Pyrenomonas salina protein is Protein translocase subunit SecY.